The primary structure comprises 327 residues: tRNA U34 carboxymethyltransferase (327 aa).

Residues Lys91, Trp105, Lys110, Gly130, 181 to 182 (IE), Met196, Tyr200, and Arg315 contribute to the carboxy-S-adenosyl-L-methionine site.

The protein belongs to the class I-like SAM-binding methyltransferase superfamily. CmoB family. In terms of assembly, homotetramer.

The enzyme catalyses carboxy-S-adenosyl-L-methionine + 5-hydroxyuridine(34) in tRNA = 5-carboxymethoxyuridine(34) in tRNA + S-adenosyl-L-homocysteine + H(+). In terms of biological role, catalyzes carboxymethyl transfer from carboxy-S-adenosyl-L-methionine (Cx-SAM) to 5-hydroxyuridine (ho5U) to form 5-carboxymethoxyuridine (cmo5U) at position 34 in tRNAs. The polypeptide is tRNA U34 carboxymethyltransferase (Pectobacterium atrosepticum (strain SCRI 1043 / ATCC BAA-672) (Erwinia carotovora subsp. atroseptica)).